The following is a 532-amino-acid chain: 2,3-bisphosphoglycerate-independent phosphoglycerate mutase (532 aa).

Mn(2+) is bound by residues Asp15 and Ser65. Ser65 serves as the catalytic Phosphoserine intermediate. Substrate-binding positions include His126, 156–157, Arg188, Arg194, 258–261, and Lys331; these read RD and RPDR. Residues Asp398, His402, Asp439, His440, and His457 each coordinate Mn(2+).

It belongs to the BPG-independent phosphoglycerate mutase family. As to quaternary structure, monomer. Requires Mn(2+) as cofactor.

It carries out the reaction (2R)-2-phosphoglycerate = (2R)-3-phosphoglycerate. It participates in carbohydrate degradation; glycolysis; pyruvate from D-glyceraldehyde 3-phosphate: step 3/5. Its function is as follows. Catalyzes the interconversion of 2-phosphoglycerate and 3-phosphoglycerate. The protein is 2,3-bisphosphoglycerate-independent phosphoglycerate mutase of Microcystis aeruginosa (strain NIES-843 / IAM M-2473).